Reading from the N-terminus, the 327-residue chain is Delta(6)-protoilludene synthase HYPSUDRAFT_138665 (327 aa).

Mg(2+)-binding residues include aspartate 79, asparagine 215, serine 219, and glutamate 223. A DDXXD motif motif is present at residues 79–83 (DEHTD). (2E,6E)-farnesyl diphosphate contacts are provided by arginine 304 and tyrosine 305.

It belongs to the terpene synthase family. Mg(2+) is required as a cofactor.

It carries out the reaction (2E,6E)-farnesyl diphosphate = Delta(6)-protoilludene + diphosphate. Terpene cyclase that catalyzes the cyclization of farnesyl diphosphate (FPP) to delta(6)-protoilludene. The sequence is that of Delta(6)-protoilludene synthase HYPSUDRAFT_138665 from Hypholoma sublateritium (strain FD-334 SS-4).